The primary structure comprises 221 residues: 7-cyano-7-deazaguanine synthase (221 aa).

Leucine 7–leucine 17 is an ATP binding site. Residues cysteine 192, cysteine 200, cysteine 203, and cysteine 206 each coordinate Zn(2+).

This sequence belongs to the QueC family. In terms of assembly, homodimer. The cofactor is Zn(2+).

The catalysed reaction is 7-carboxy-7-deazaguanine + NH4(+) + ATP = 7-cyano-7-deazaguanine + ADP + phosphate + H2O + H(+). The protein operates within purine metabolism; 7-cyano-7-deazaguanine biosynthesis. In terms of biological role, catalyzes the ATP-dependent conversion of 7-carboxy-7-deazaguanine (CDG) to 7-cyano-7-deazaguanine (preQ(0)). This Pelotomaculum thermopropionicum (strain DSM 13744 / JCM 10971 / SI) protein is 7-cyano-7-deazaguanine synthase.